Here is a 125-residue protein sequence, read N- to C-terminus: Large ribosomal subunit protein bL12 (125 aa).

It belongs to the bacterial ribosomal protein bL12 family. Homodimer. Part of the ribosomal stalk of the 50S ribosomal subunit. Forms a multimeric L10(L12)X complex, where L10 forms an elongated spine to which 2 to 4 L12 dimers bind in a sequential fashion. Binds GTP-bound translation factors.

Forms part of the ribosomal stalk which helps the ribosome interact with GTP-bound translation factors. Is thus essential for accurate translation. The polypeptide is Large ribosomal subunit protein bL12 (Methylobacterium radiotolerans (strain ATCC 27329 / DSM 1819 / JCM 2831 / NBRC 15690 / NCIMB 10815 / 0-1)).